The following is an 87-amino-acid chain: Phosphoribosyl-ATP pyrophosphatase (87 aa).

It belongs to the PRA-PH family.

The protein resides in the cytoplasm. It catalyses the reaction 1-(5-phospho-beta-D-ribosyl)-ATP + H2O = 1-(5-phospho-beta-D-ribosyl)-5'-AMP + diphosphate + H(+). It participates in amino-acid biosynthesis; L-histidine biosynthesis; L-histidine from 5-phospho-alpha-D-ribose 1-diphosphate: step 2/9. The protein is Phosphoribosyl-ATP pyrophosphatase of Bifidobacterium longum (strain DJO10A).